The chain runs to 291 residues: Endo-1,4-beta-xylanase 11B (291 aa).

A signal peptide spans 1–19 (MVAFSSLFLGASIAATALA). Residues 34–222 (TYTQSATGTH…SSGSARINVG (189 aa)) form the GH11 domain. The N-linked (GlcNAc...) asparagine glycan is linked to asparagine 93. The active-site Nucleophile is the glutamate 118. The active-site Proton donor is glutamate 209. Residues 223-246 (GGSTGGGNNGGGNNGGNPGGNPGG) are disordered. In terms of domain architecture, CBM1 spans 255–291 (NCSPRWGQCGGQGWNGPTCCESGTTCRQQNQWYSQCL).

Belongs to the glycosyl hydrolase 11 (cellulase G) family.

It localises to the secreted. The catalysed reaction is Endohydrolysis of (1-&gt;4)-beta-D-xylosidic linkages in xylans.. It functions in the pathway glycan degradation; xylan degradation. The activity iss completely inhibited by Hg(2+), a metal ion that interacts with Trp and oxidizes the indole ring, and is significantly enhanced by beta-mercaptoethanol, which counteracts the oxidation effects of the S-S linkage between Cys residues. Functionally, endo-1,4-beta-xylanase involved in the hydrolysis of xylan, a major structural heterogeneous polysaccharide found in plant biomass representing the second most abundant polysaccharide in the biosphere, after cellulose. Shows maximum activity on soluble wheat arabinoxylan (defined as 100%), moderate activity on birchwood xylan (80.5%) and beechwood xylan (76.2%), and weak activity on insoluble wheat arabinoxylan (7.0%). Has no activity towards glucan or carboxymethyl cellulose-sodium (CMC-Na). The protein is Endo-1,4-beta-xylanase 11B of Humicola insolens (Soft-rot fungus).